A 411-amino-acid chain; its full sequence is Pyruvate dehydrogenase E1 component subunit alpha, mitochondrial (411 aa).

Residues 1–29 (MFSRAVRLSRAALPIRVASQRVPIAARRS) constitute a mitochondrion transit peptide. Pyruvate-binding residues include histidine 111, tyrosine 137, arginine 138, glycine 184, valine 186, aspartate 215, glycine 216, alanine 217, asparagine 244, and tyrosine 246. The thiamine diphosphate site is built by tyrosine 137, arginine 138, glycine 184, valine 186, aspartate 215, glycine 216, alanine 217, and asparagine 244. Residue aspartate 215 coordinates Mg(2+). Mg(2+) contacts are provided by asparagine 244 and tyrosine 246. Thiamine diphosphate is bound at residue histidine 311.

As to quaternary structure, eukaryotic pyruvate dehydrogenase (PDH) complexes are organized as a core consisting of the oligomeric dihydrolipoamide acetyl-transferase (E2), around which are arranged multiple copies of pyruvate dehydrogenase (E1), dihydrolipoamide dehydrogenase (E3) and protein X (E3BP) bound by non-covalent bonds. The Chaetomium thermophilum PDH complex contains 60 E2 units, 12 E3BP units, about 20 E1 units, and 12 or more E3 units. The units are organized in 1 E2 60-mer, 4 E3BP trimers, about 20 E1 tetramers, and a maximum of 12 E3 dimers. Pyruvate dehydrogenase (E1) is active as a tetramer of 2 alpha and 2 beta subunits. The E3BP trimers are bound inside the icosahedral core with tetrahedral symmetry. Thiamine diphosphate is required as a cofactor. It depends on Mg(2+) as a cofactor.

It localises to the mitochondrion. The catalysed reaction is N(6)-[(R)-lipoyl]-L-lysyl-[protein] + pyruvate + H(+) = N(6)-[(R)-S(8)-acetyldihydrolipoyl]-L-lysyl-[protein] + CO2. Functionally, the 10-megadalton pyruvate dehydrogenase complex contains multiple copies of three enzymatic components: pyruvate dehydrogenase (E1), dihydrolipoamide acetyltransferase (E2) and lipoamide dehydrogenase (E3) and catalyzes the overall oxidative decarboxylation of pyruvate to form acetyl-CoA and CO(2). Within the complex, pyruvate and thiamine pyrophosphate (TPP or vitamin B1) are bound by pyruvate dehydrogenase E1 subunits alpha and beta and pyruvate is decarboxylated leading to the 2-carbon hydrohyethyl bound to TPP. The E2 component contains covalently-bound lipoyl cofactors and transfers the hydroxyethyl group from TPP to an oxidized form of covalently bound lipoamide, and the resulting acetyl group is then transferred to free coenzyme A to form acetyl-CoA and reduced dihydrolipoamide-E2. Finally, the flavoprotein dihydrolipoamide dehydrogenase (E3) re-oxidizes the lipoyl group of dihydrolipoamide-E2 to form lipoamide-E2 and NADH. A fourth subunit, E3BP, is responsible for tethering E3 in proximity to the core, forming the entire metabolon. The polypeptide is Pyruvate dehydrogenase E1 component subunit alpha, mitochondrial (Chaetomium thermophilum (strain DSM 1495 / CBS 144.50 / IMI 039719) (Thermochaetoides thermophila)).